Consider the following 340-residue polypeptide: Glyceraldehyde-3-phosphate dehydrogenase (340 aa).

Residues 11 to 12 (SI) and G111 contribute to the NAD(+) site. A D-glyceraldehyde 3-phosphate-binding site is contributed by 140 to 142 (SCN). C141 functions as the Nucleophile in the catalytic mechanism. R169 provides a ligand contact to NAD(+). 195 to 196 (HG) contributes to the D-glyceraldehyde 3-phosphate binding site. NAD(+) is bound at residue Q303.

This sequence belongs to the glyceraldehyde-3-phosphate dehydrogenase family. As to quaternary structure, homotetramer.

The protein resides in the cytoplasm. It catalyses the reaction D-glyceraldehyde 3-phosphate + phosphate + NADP(+) = (2R)-3-phospho-glyceroyl phosphate + NADPH + H(+). The enzyme catalyses D-glyceraldehyde 3-phosphate + phosphate + NAD(+) = (2R)-3-phospho-glyceroyl phosphate + NADH + H(+). The protein operates within carbohydrate degradation; glycolysis; pyruvate from D-glyceraldehyde 3-phosphate: step 1/5. The chain is Glyceraldehyde-3-phosphate dehydrogenase from Methanococcus maripaludis (strain C6 / ATCC BAA-1332).